The sequence spans 422 residues: Glyceraldehyde-3-phosphate dehydrogenase GAPCP1, chloroplastic (422 aa).

Residues 1–69 constitute a chloroplast transit peptide; that stretch reads MAFSSLLRSA…NARSVQPIKA (69 aa). The segment covering 50–63 has biased composition (polar residues); that stretch reads SGISSSLQNGNARS. The tract at residues 50–84 is disordered; it reads SGISSSLQNGNARSVQPIKATATEVPSAVRRSSSS. The residue at position 70 (Thr70) is an N-acetylthreonine. NAD(+) is bound by residues 96–97, Asp118, and Arg164; that span reads RI. D-glyceraldehyde 3-phosphate contacts are provided by residues 235–237, Thr266, 295–296, and Arg318; these read SCT and TG. The Nucleophile role is filled by Cys236. Asn400 contacts NAD(+).

This sequence belongs to the glyceraldehyde-3-phosphate dehydrogenase family. In terms of assembly, homotetramer. As to expression, expressed in shoot and root vasculature, leaf veins and vascular tissue of flowers and siliques.

The protein localises to the plastid. The protein resides in the chloroplast stroma. It carries out the reaction D-glyceraldehyde 3-phosphate + phosphate + NAD(+) = (2R)-3-phospho-glyceroyl phosphate + NADH + H(+). Involved in plastidial glycolytic pathway and plays a specific role in glycolytic energy production in non-green plastids and chloroplasts. Essential for breakdown of starch to form sucrose for export to non-photosynthetic tissues, and to generate primary metabolites for anabolic pathways such as fatty acid and amino acid synthesis. Plays an important role in plant development by providing substrates for the phosphorylated pathway of serine biosynthesis in roots. Plays a crucial role in pollen development. Functionally redundant with GAPCP2. This is Glyceraldehyde-3-phosphate dehydrogenase GAPCP1, chloroplastic (GAPCP1) from Arabidopsis thaliana (Mouse-ear cress).